Consider the following 149-residue polypeptide: MTENFRHIVRVAGVDIDGHKQVRWALTGIKGIGINFATMVLRVAGIDPFMKAGYLTDEQVKKIEEILADPVAHGIPAWAVNRPKDYETGKDMHLITAKLVMAWREDVNRLRRIRAYRGIRHELGLPVRGQRTRSNFRHGTTVGVSRRKK.

It belongs to the universal ribosomal protein uS13 family. In terms of assembly, part of the 30S ribosomal subunit. Forms a loose heterodimer with protein S19. Forms two bridges to the 50S subunit in the 70S ribosome.

Functionally, located at the top of the head of the 30S subunit, it contacts several helices of the 16S rRNA. In the 70S ribosome it contacts the 23S rRNA (bridge B1a) and protein L5 of the 50S subunit (bridge B1b), connecting the 2 subunits; these bridges are implicated in subunit movement. The sequence is that of Small ribosomal subunit protein uS13 from Thermococcus kodakarensis (strain ATCC BAA-918 / JCM 12380 / KOD1) (Pyrococcus kodakaraensis (strain KOD1)).